The chain runs to 265 residues: 3-methyl-2-oxobutanoate hydroxymethyltransferase (265 aa).

Mg(2+) contacts are provided by Asp43 and Asp82. 3-methyl-2-oxobutanoate contacts are provided by residues 43-44, Asp82, and Lys111; that span reads DS. Glu113 is a Mg(2+) binding site. The Proton acceptor role is filled by Glu180.

The protein belongs to the PanB family. As to quaternary structure, homodecamer; pentamer of dimers. Requires Mg(2+) as cofactor.

It is found in the cytoplasm. It catalyses the reaction 3-methyl-2-oxobutanoate + (6R)-5,10-methylene-5,6,7,8-tetrahydrofolate + H2O = 2-dehydropantoate + (6S)-5,6,7,8-tetrahydrofolate. Its pathway is cofactor biosynthesis; (R)-pantothenate biosynthesis; (R)-pantoate from 3-methyl-2-oxobutanoate: step 1/2. Its function is as follows. Catalyzes the reversible reaction in which hydroxymethyl group from 5,10-methylenetetrahydrofolate is transferred onto alpha-ketoisovalerate to form ketopantoate. This Francisella tularensis subsp. novicida (strain U112) protein is 3-methyl-2-oxobutanoate hydroxymethyltransferase.